The following is a 332-amino-acid chain: MQGSLMLDIGGTWLTAEDRQILRHPEVGGLIIFARNIEHPAQVRELCAAIRAIRPDLLLAVDQEGGRVQRLRQGFVRLPAMRAIADNPNAEELAEHCGWLMATEVQAVGLDLSFAPVLDLDHQRSAVVGSRAFEGDPERAALLAGAFIRGMHAAGMAATGKHFPGHGWAEADSHVAIPEDARSLEEIRRSDLVPFARLAGQLDALMPAHVIYPQVDPQPAGFSRRWLQEILRGELKFDGVIFSDDLSMAGAHVVGDAASRIEAALAAGCDMGLVCNDRASAELALAALQRLKVTPPSRLQRMRGKGYANTDYRQQPRWLEALSALRAAQLID.

Substrate-binding positions include Asp-62, Arg-70, Arg-131, and Lys-161–His-162. Catalysis depends on His-174, which acts as the Proton donor/acceptor. Asp-244 functions as the Nucleophile in the catalytic mechanism.

The protein belongs to the glycosyl hydrolase 3 family. NagZ subfamily.

The protein resides in the cytoplasm. The catalysed reaction is Hydrolysis of terminal non-reducing N-acetyl-D-hexosamine residues in N-acetyl-beta-D-hexosaminides.. It participates in cell wall biogenesis; peptidoglycan recycling. Plays a role in peptidoglycan recycling by cleaving the terminal beta-1,4-linked N-acetylglucosamine (GlcNAc) from peptide-linked peptidoglycan fragments, giving rise to free GlcNAc, anhydro-N-acetylmuramic acid and anhydro-N-acetylmuramic acid-linked peptides. In Pseudomonas aeruginosa (strain LESB58), this protein is Beta-hexosaminidase.